The sequence spans 180 residues: uncharacterized protein (180 aa).

This is an uncharacterized protein from Dictyostelium discoideum (Social amoeba).